We begin with the raw amino-acid sequence, 314 residues long: Olfactory receptor 52K2 (314 aa).

Residues 1–27 (MSASNITLTHPTAFLLVGIPGLEHLHI) are Extracellular-facing. N-linked (GlcNAc...) asparagine glycosylation is present at Asn-5. The helical transmembrane segment at 28–48 (WISIPFCLAYTLALLGNCTLL) threads the bilayer. The Cytoplasmic segment spans residues 49 to 56 (LIIQADAA). Residues 57–77 (LHEPMYLFLAMLAAIDLVLSS) form a helical membrane-spanning segment. The Extracellular segment spans residues 78-101 (SALPKMLAIFWFRDREINFFACLA). Cysteines 99 and 191 form a disulfide. The helical transmembrane segment at 102–122 (QMFFLHSFSIMESAVLLAMAF) threads the bilayer. Topologically, residues 123-141 (DRYVAICKPLHYTKVLTGS) are cytoplasmic. A helical transmembrane segment spans residues 142-162 (LITKIGMAAVARAVTLMTPLP). Residues 163–198 (FLLRCFHYCRGPVIAHCYCEHMAVVRLACGDTSFNN) lie on the Extracellular side of the membrane. Residues 199-219 (IYGIAVAMFIVVLDLLLVILS) traverse the membrane as a helical segment. Residues 220–239 (YIFILQAVLLLASQEARYKA) are Cytoplasmic-facing. A helical transmembrane segment spans residues 240 to 260 (FGTCVSHIGAILAFYTTVVIS). Residues 261–275 (SVMHRVARHAAPHVH) are Extracellular-facing. Residues 276–296 (ILLANFYLLFPPMVNPIIYGV) form a helical membrane-spanning segment. The Cytoplasmic portion of the chain corresponds to 297–314 (KTKQIRESILGVFPRKDM).

The protein belongs to the G-protein coupled receptor 1 family.

It is found in the cell membrane. Functionally, odorant receptor. The protein is Olfactory receptor 52K2 (OR52K2) of Homo sapiens (Human).